Here is a 582-residue protein sequence, read N- to C-terminus: Protein NRT1/ PTR FAMILY 5.2 (582 aa).

11 helical membrane-spanning segments follow: residues 77-97, 100-120, 141-161, 189-209, 217-237, 334-354, 370-390, 408-428, 452-472, 493-515, and 538-558; these read WVGT…ALLG, ITFV…TLSV, ASVL…IGTG, FFNW…TVLV, WTLG…IFLL, PVLF…TLFV, IPPA…IVLY, ITLL…MIVA, LPLT…ADSF, GTSY…LSTV, and YYYL…LVVV.

It belongs to the major facilitator superfamily. Proton-dependent oligopeptide transporter (POT/PTR) (TC 2.A.17) family. Expressed in roots. Detected in shoots, leaves and flowers.

The protein localises to the membrane. Functionally, peptide transporter involved in stress tolerance in seeds during germination and in defense against virulent bacterial pathogens. In Arabidopsis thaliana (Mouse-ear cress), this protein is Protein NRT1/ PTR FAMILY 5.2 (NPF5.2).